Here is a 53-residue protein sequence, read N- to C-terminus: Conotoxin Cal9.2e (53 aa).

Positions 1–6 (KKGVTQ) are excised as a propeptide. Cystine bridges form between C15–C32, C20–C42, and C22–C47.

Expressed by the venom duct.

It localises to the secreted. Its function is as follows. Probable neurotoxin with unknown target. Possibly targets ion channels. This Californiconus californicus (California cone) protein is Conotoxin Cal9.2e.